Here is a 376-residue protein sequence, read N- to C-terminus: Eugenol O-methyltransferase (376 aa).

S-adenosyl-L-methionine is bound by residues glycine 219, aspartate 242, methionine 263, and lysine 276. The active-site Proton acceptor is histidine 280.

Belongs to the class I-like SAM-binding methyltransferase superfamily. Cation-independent O-methyltransferase family. COMT subfamily. As to quaternary structure, homodimer. In terms of tissue distribution, expressed predominantly in root hairs.

It catalyses the reaction (E)-isoeugenol + S-adenosyl-L-methionine = (E)-isomethyleugenol + S-adenosyl-L-homocysteine + H(+). Functionally, O-methyltransferase. Substrate preference is eugenol &gt;&gt; orcinol monomethyl ether &gt; resorcinol monomethyl ether. The protein is Eugenol O-methyltransferase (EOMT) of Sorghum bicolor (Sorghum).